The chain runs to 140 residues: Sec-independent protein translocase protein TatB (140 aa).

Residues 1 to 21 (MFDIGFSELLLIAVVALVVLG) traverse the membrane as a helical segment. A disordered region spans residues 119–140 (VHVTSPPPSTSTHGNNGQEKSQ). The span at 128–140 (TSTHGNNGQEKSQ) shows a compositional bias: polar residues.

The protein belongs to the TatB family. As to quaternary structure, the Tat system comprises two distinct complexes: a TatABC complex, containing multiple copies of TatA, TatB and TatC subunits, and a separate TatA complex, containing only TatA subunits. Substrates initially bind to the TatABC complex, which probably triggers association of the separate TatA complex to form the active translocon.

It is found in the cell inner membrane. Part of the twin-arginine translocation (Tat) system that transports large folded proteins containing a characteristic twin-arginine motif in their signal peptide across membranes. Together with TatC, TatB is part of a receptor directly interacting with Tat signal peptides. TatB may form an oligomeric binding site that transiently accommodates folded Tat precursor proteins before their translocation. In Xylella fastidiosa (strain 9a5c), this protein is Sec-independent protein translocase protein TatB.